The sequence spans 730 residues: Aspyridones cluster regulator apdR (730 aa).

A DNA-binding region (zn(2)-C6 fungal-type) is located at residues 20–46; that stretch reads CTECRRRKIRCDQATPCRHCEKAALRC.

The protein localises to the nucleus. Functionally, transcription factor involved in regulation of gene cluster that mediates the biosynthesis of aspyridones. The polypeptide is Aspyridones cluster regulator apdR (Emericella nidulans (strain FGSC A4 / ATCC 38163 / CBS 112.46 / NRRL 194 / M139) (Aspergillus nidulans)).